The sequence spans 461 residues: Phosphoglucosamine mutase (461 aa).

Residue serine 113 is the Phosphoserine intermediate of the active site. Mg(2+) contacts are provided by serine 113, aspartate 251, aspartate 253, and aspartate 255. The residue at position 113 (serine 113) is a Phosphoserine.

This sequence belongs to the phosphohexose mutase family. Mg(2+) serves as cofactor. Activated by phosphorylation.

It catalyses the reaction alpha-D-glucosamine 1-phosphate = D-glucosamine 6-phosphate. Catalyzes the conversion of glucosamine-6-phosphate to glucosamine-1-phosphate. This chain is Phosphoglucosamine mutase, found in Prochlorococcus marinus (strain SARG / CCMP1375 / SS120).